Reading from the N-terminus, the 76-residue chain is U1-cyrtautoxin-As1b (76 aa).

Disulfide bonds link Cys-23–Cys-37, Cys-30–Cys-51, Cys-36–Cys-66, and Cys-69–Cys-76.

This sequence belongs to the neurotoxin 21 family. Expressed by the venom gland.

The protein localises to the secreted. Functionally, neurotoxin with probable ion channel impairing activity. Is both paralytic and lethal, when injected into lepidopteran larvae. This chain is U1-cyrtautoxin-As1b, found in Apomastus schlingeri (Trap-door spider).